We begin with the raw amino-acid sequence, 373 residues long: Queuine tRNA-ribosyltransferase (373 aa).

The active-site Proton acceptor is the D90. Substrate is bound by residues 90–94, D144, Q193, and G220; that span reads DSGGF. The interval 251–257 is RNA binding; sequence GVGTPED. The active-site Nucleophile is D270. The tract at residues 275–279 is RNA binding; important for wobble base 34 recognition; it reads TRNAR. Zn(2+)-binding residues include C308, C310, C313, and H339.

This sequence belongs to the queuine tRNA-ribosyltransferase family. As to quaternary structure, homodimer. Within each dimer, one monomer is responsible for RNA recognition and catalysis, while the other monomer binds to the replacement base PreQ1. Zn(2+) is required as a cofactor.

It catalyses the reaction 7-aminomethyl-7-carbaguanine + guanosine(34) in tRNA = 7-aminomethyl-7-carbaguanosine(34) in tRNA + guanine. Its pathway is tRNA modification; tRNA-queuosine biosynthesis. Catalyzes the base-exchange of a guanine (G) residue with the queuine precursor 7-aminomethyl-7-deazaguanine (PreQ1) at position 34 (anticodon wobble position) in tRNAs with GU(N) anticodons (tRNA-Asp, -Asn, -His and -Tyr). Catalysis occurs through a double-displacement mechanism. The nucleophile active site attacks the C1' of nucleotide 34 to detach the guanine base from the RNA, forming a covalent enzyme-RNA intermediate. The proton acceptor active site deprotonates the incoming PreQ1, allowing a nucleophilic attack on the C1' of the ribose to form the product. After dissociation, two additional enzymatic reactions on the tRNA convert PreQ1 to queuine (Q), resulting in the hypermodified nucleoside queuosine (7-(((4,5-cis-dihydroxy-2-cyclopenten-1-yl)amino)methyl)-7-deazaguanosine). This chain is Queuine tRNA-ribosyltransferase, found in Campylobacter jejuni subsp. doylei (strain ATCC BAA-1458 / RM4099 / 269.97).